The following is a 200-amino-acid chain: Endochitinase (200 aa).

Catalysis depends on Glu-58, which acts as the Proton donor.

The protein belongs to the glycosyl hydrolase 19 family. Chitinase class I subfamily.

The enzyme catalyses Random endo-hydrolysis of N-acetyl-beta-D-glucosaminide (1-&gt;4)-beta-linkages in chitin and chitodextrins.. In terms of biological role, this protein functions as a defense against chitin-containing fungal pathogens. The polypeptide is Endochitinase (Avena sativa (Oat)).